The sequence spans 447 residues: Glutamyl-tRNA reductase (447 aa).

Residues 49-52, S109, 114-116, and Q120 contribute to the substrate site; these read TCNR and EQQ. Residue C50 is the Nucleophile of the active site. 189 to 194 serves as a coordination point for NADP(+); it reads GAGSMG.

It belongs to the glutamyl-tRNA reductase family. As to quaternary structure, homodimer.

It catalyses the reaction (S)-4-amino-5-oxopentanoate + tRNA(Glu) + NADP(+) = L-glutamyl-tRNA(Glu) + NADPH + H(+). Its pathway is porphyrin-containing compound metabolism; protoporphyrin-IX biosynthesis; 5-aminolevulinate from L-glutamyl-tRNA(Glu): step 1/2. Functionally, catalyzes the NADPH-dependent reduction of glutamyl-tRNA(Glu) to glutamate 1-semialdehyde (GSA). The chain is Glutamyl-tRNA reductase from Mycobacterium sp. (strain JLS).